Reading from the N-terminus, the 521-residue chain is GMP synthase [glutamine-hydrolyzing] (521 aa).

The Glutamine amidotransferase type-1 domain occupies 8-203 (KILILDFGAQ…VVDVCGCQTL (196 aa)). C85 functions as the Nucleophile in the catalytic mechanism. Catalysis depends on residues H177 and E179. One can recognise a GMPS ATP-PPase domain in the interval 204 to 396 (WTAANIIDDQ…LGLPRTMVYR (193 aa)). ATP is bound at residue 231–237 (SGGVDSS).

Homodimer.

The enzyme catalyses XMP + L-glutamine + ATP + H2O = GMP + L-glutamate + AMP + diphosphate + 2 H(+). The protein operates within purine metabolism; GMP biosynthesis; GMP from XMP (L-Gln route): step 1/1. Its function is as follows. Catalyzes the synthesis of GMP from XMP. This is GMP synthase [glutamine-hydrolyzing] from Xanthomonas campestris pv. campestris (strain B100).